A 204-amino-acid polypeptide reads, in one-letter code: Wound-induced proteinase inhibitor 2 (204 aa).

An N-terminal signal peptide occupies residues 1-25; the sequence is MAVPKEVSFLASLLVLGILLLHVDA. Tandem repeats lie at residues 25–67, 68–125, and 126–183. Disulfide bonds link C28/C100, C38/C75, C41/C59, C42/C71, C48/C84, and C99/C117. A 4; truncated repeat occupies 184–204; the sequence is PKACPKNCDPNIAYSLCLYEK.

Belongs to the protease inhibitor I20 (potato type II proteinase inhibitor) family.

The sequence is that of Wound-induced proteinase inhibitor 2 (PIN2) from Capsicum annuum (Capsicum pepper).